The sequence spans 405 residues: MEPETKKTKTDSKKIVLLGGDFCGPEVIAEAVKVLKSVAEASGTEFVFEDRLIGGAAIEKEGEPITDATLDICRKADSIMLGAVGGAANTVWTTPDGRTDVRPEQGLLKLRKDLNLYANLRPCQLLSPKLADLSPIRNVEGTDFIIVRELVGGIYFGERKEDDGSGVASDTETYSVPEVERIARMAAFLALQHNPPLPVWSLDKANVLASSRLWRKTVTRVLKDEFPQLELNHQLIDSAAMILIKQPSKMNGIIITTNMFGDIISDEASVIPGSLGLLPSASLASLPDTNEAFGLYEPCHGSAPDLGKQKVNPIATILSAAMMLKFSLNMKPAGDAVEAAVKESVEAGITTADIGGSSSTSEVGDLLPTRSRSCSRRSKSFLRRIDGRSKLTRLRVGLPAGSASV.

Residue 86 to 104 (GAANTVWTTPDGRTDVRPE) coordinates NAD(+). R111, R121, R148, and D237 together coordinate substrate. D237, D262, and D266 together coordinate Mg(2+). NAD(+) is bound at residue 301 to 312 (GSAPDLGKQKVN). A disordered region spans residues 352-371 (ADIGGSSSTSEVGDLLPTRS).

It belongs to the isocitrate and isopropylmalate dehydrogenases family. In terms of assembly, homodimer. Requires Mg(2+) as cofactor. Mn(2+) serves as cofactor.

Its subcellular location is the cytoplasm. It carries out the reaction (2R,3S)-3-isopropylmalate + NAD(+) = 4-methyl-2-oxopentanoate + CO2 + NADH. It functions in the pathway amino-acid biosynthesis; L-leucine biosynthesis; L-leucine from 3-methyl-2-oxobutanoate: step 3/4. Its function is as follows. Catalyzes the oxidation of 3-carboxy-2-hydroxy-4-methylpentanoate (3-isopropylmalate) to 3-carboxy-4-methyl-2-oxopentanoate. The product decarboxylates to 4-methyl-2 oxopentanoate. This Yarrowia lipolytica (strain CLIB 122 / E 150) (Yeast) protein is 3-isopropylmalate dehydrogenase (LEU2).